The sequence spans 123 residues: UPF0102 protein VFMJ11_2324 (123 aa).

It belongs to the UPF0102 family.

The polypeptide is UPF0102 protein VFMJ11_2324 (Aliivibrio fischeri (strain MJ11) (Vibrio fischeri)).